The chain runs to 469 residues: 3-isopropylmalate dehydratase large subunit (469 aa).

Residues cysteine 349, cysteine 410, and cysteine 413 each contribute to the [4Fe-4S] cluster site.

The protein belongs to the aconitase/IPM isomerase family. LeuC type 1 subfamily. In terms of assembly, heterodimer of LeuC and LeuD. Requires [4Fe-4S] cluster as cofactor.

It carries out the reaction (2R,3S)-3-isopropylmalate = (2S)-2-isopropylmalate. It participates in amino-acid biosynthesis; L-leucine biosynthesis; L-leucine from 3-methyl-2-oxobutanoate: step 2/4. In terms of biological role, catalyzes the isomerization between 2-isopropylmalate and 3-isopropylmalate, via the formation of 2-isopropylmaleate. This chain is 3-isopropylmalate dehydratase large subunit, found in Neisseria meningitidis serogroup A / serotype 4A (strain DSM 15465 / Z2491).